Here is a 78-residue protein sequence, read N- to C-terminus: Large ribosomal subunit protein bL28 (78 aa).

The protein belongs to the bacterial ribosomal protein bL28 family.

The protein is Large ribosomal subunit protein bL28 of Psychrobacter sp. (strain PRwf-1).